The chain runs to 120 residues: MYKNIKKFKLESFIAQEIGNLIVSGGIKDPRIHSFLTVVKVEFSKDLINAKVFMGSIKEGASLDNAVKALNNAKGFIQSQIIKRIKVRSTPKLLFVKDDSLSKSFYVNKLIEGLNTTREN.

This sequence belongs to the RbfA family. Monomer. Binds 30S ribosomal subunits, but not 50S ribosomal subunits or 70S ribosomes.

The protein localises to the cytoplasm. Functionally, one of several proteins that assist in the late maturation steps of the functional core of the 30S ribosomal subunit. Associates with free 30S ribosomal subunits (but not with 30S subunits that are part of 70S ribosomes or polysomes). Required for efficient processing of 16S rRNA. May interact with the 5'-terminal helix region of 16S rRNA. This chain is Ribosome-binding factor A, found in Borreliella burgdorferi (strain ATCC 35210 / DSM 4680 / CIP 102532 / B31) (Borrelia burgdorferi).